A 657-amino-acid chain; its full sequence is DNA ligase (657 aa).

An NAD(+)-binding site is contributed by 80–81 (SL). The active-site N6-AMP-lysine intermediate is Lys104. 3 residues coordinate NAD(+): Arg125, Glu159, and Lys297. Cys386, Cys389, Cys406, and Cys411 together coordinate Zn(2+). The BRCT domain maps to 571–657 (QSEQIFENLN…EWLNNGVRPE (87 aa)).

It belongs to the NAD-dependent DNA ligase family. LigA subfamily. It depends on Mg(2+) as a cofactor. The cofactor is Mn(2+).

It catalyses the reaction NAD(+) + (deoxyribonucleotide)n-3'-hydroxyl + 5'-phospho-(deoxyribonucleotide)m = (deoxyribonucleotide)n+m + AMP + beta-nicotinamide D-nucleotide.. DNA ligase that catalyzes the formation of phosphodiester linkages between 5'-phosphoryl and 3'-hydroxyl groups in double-stranded DNA using NAD as a coenzyme and as the energy source for the reaction. It is essential for DNA replication and repair of damaged DNA. In Ruminiclostridium cellulolyticum (strain ATCC 35319 / DSM 5812 / JCM 6584 / H10) (Clostridium cellulolyticum), this protein is DNA ligase.